The primary structure comprises 179 residues: ATP synthase subunit delta (179 aa).

Belongs to the ATPase delta chain family. F-type ATPases have 2 components, F(1) - the catalytic core - and F(0) - the membrane proton channel. F(1) has five subunits: alpha(3), beta(3), gamma(1), delta(1), epsilon(1). F(0) has three main subunits: a(1), b(2) and c(10-14). The alpha and beta chains form an alternating ring which encloses part of the gamma chain. F(1) is attached to F(0) by a central stalk formed by the gamma and epsilon chains, while a peripheral stalk is formed by the delta and b chains.

It localises to the cell inner membrane. Its function is as follows. F(1)F(0) ATP synthase produces ATP from ADP in the presence of a proton or sodium gradient. F-type ATPases consist of two structural domains, F(1) containing the extramembraneous catalytic core and F(0) containing the membrane proton channel, linked together by a central stalk and a peripheral stalk. During catalysis, ATP synthesis in the catalytic domain of F(1) is coupled via a rotary mechanism of the central stalk subunits to proton translocation. This protein is part of the stalk that links CF(0) to CF(1). It either transmits conformational changes from CF(0) to CF(1) or is implicated in proton conduction. The protein is ATP synthase subunit delta of Alkalilimnicola ehrlichii (strain ATCC BAA-1101 / DSM 17681 / MLHE-1).